Consider the following 55-residue polypeptide: uncharacterized protein (55 aa).

This is an uncharacterized protein from Thermoproteus tenax (TTV1).